The chain runs to 218 residues: 7-cyano-7-deazaguanine synthase (218 aa).

Tyr9 to Leu19 lines the ATP pocket. 4 residues coordinate Zn(2+): Cys185, Cys193, Cys196, and Cys199.

The protein belongs to the QueC family. The cofactor is Zn(2+).

It catalyses the reaction 7-carboxy-7-deazaguanine + NH4(+) + ATP = 7-cyano-7-deazaguanine + ADP + phosphate + H2O + H(+). It participates in purine metabolism; 7-cyano-7-deazaguanine biosynthesis. Functionally, catalyzes the ATP-dependent conversion of 7-carboxy-7-deazaguanine (CDG) to 7-cyano-7-deazaguanine (preQ(0)). The chain is 7-cyano-7-deazaguanine synthase from Pseudoalteromonas translucida (strain TAC 125).